A 360-amino-acid chain; its full sequence is S-adenosylmethionine:tRNA ribosyltransferase-isomerase (360 aa).

This sequence belongs to the QueA family. In terms of assembly, monomer.

It localises to the cytoplasm. The catalysed reaction is 7-aminomethyl-7-carbaguanosine(34) in tRNA + S-adenosyl-L-methionine = epoxyqueuosine(34) in tRNA + adenine + L-methionine + 2 H(+). It functions in the pathway tRNA modification; tRNA-queuosine biosynthesis. Transfers and isomerizes the ribose moiety from AdoMet to the 7-aminomethyl group of 7-deazaguanine (preQ1-tRNA) to give epoxyqueuosine (oQ-tRNA). The chain is S-adenosylmethionine:tRNA ribosyltransferase-isomerase from Rhizobium meliloti (strain 1021) (Ensifer meliloti).